A 1551-amino-acid chain; its full sequence is Serine/threonine-protein kinase MRCK gamma (1551 aa).

In terms of domain architecture, Protein kinase spans 71-337 (FEILKVIGRG…LDDFRNHPFF (267 aa)). ATP-binding positions include 77–85 (IGRGAFGEV) and Lys-100. Residue Asp-195 is the Proton acceptor of the active site. Phosphoserine; by autocatalysis is present on residues Ser-216 and Ser-228. At Thr-234 the chain carries Phosphothreonine; by autocatalysis. One can recognise an AGC-kinase C-terminal domain in the interval 338–408 (EGVDWERLAS…TSGSHSPESS (71 aa)). Coiled-coil stretches lie at residues 406 to 678 (ESSS…SNWE) and 730 to 802 (KARR…RARG). Disordered regions lie at residues 467-486 (KASL…QDSD), 655-675 (ELAQ…ETES), 801-849 (RGPV…PEGR), and 863-886 (TANT…PRSF). A compositionally biased stretch (basic and acidic residues) spans 655 to 674 (ELAQEQESKQRLEGERRETE). The segment covering 835–849 (ATRHGGEPDLRPEGR) has biased composition (basic and acidic residues). The segment at 878–927 (SHTLRPRSFPSPTKCLRCTSLMLGLGRQGLGCDACGYFCHTTCAPQAPPC) adopts a Phorbol-ester/DAG-type zinc-finger fold. A PH domain is found at 947–1066 (GTAYEGFLSV…WLQVLGELQR (120 aa)). Residues 1092–1366 (LPHTLCAAIL…RPLNPEGSLF (275 aa)) form the CNH domain. One can recognise a CRIB domain in the interval 1437 to 1450 (ISPPTNFNHLVHVG). Positions 1442-1551 (NFNHLVHVGP…PLSPELESSP (110 aa)) are disordered. Residues 1457–1470 (GARDKSPAPEEKGR) show a composition bias toward basic and acidic residues. Residue Ser-1482 is modified to Phosphoserine. The span at 1511–1533 (TSLSSESVSCPQGSLSPATSLMQ) shows a compositional bias: polar residues. Positions 1540 to 1551 (SLPLSPELESSP) are enriched in low complexity.

It belongs to the protein kinase superfamily. AGC Ser/Thr protein kinase family. DMPK subfamily. In terms of assembly, homodimer and homotetramer via the coiled coil regions. Interacts tightly with GTP-bound but not GDP-bound CDC42. The cofactor is Mg(2+). Expressed in heart and skeletal muscle.

It is found in the cytoplasm. The catalysed reaction is L-seryl-[protein] + ATP = O-phospho-L-seryl-[protein] + ADP + H(+). It catalyses the reaction L-threonyl-[protein] + ATP = O-phospho-L-threonyl-[protein] + ADP + H(+). Its activity is regulated as follows. Maintained in an inactive, closed conformation by an interaction between the kinase domain and the negative autoregulatory C-terminal coiled-coil region. Agonist binding to the phorbol ester binding site disrupts this, releasing the kinase domain to allow N-terminus-mediated dimerization and kinase activation by transautophosphorylation. Functionally, may act as a downstream effector of CDC42 in cytoskeletal reorganization. Contributes to the actomyosin contractility required for cell invasion, through the regulation of MYPT1 and thus MLC2 phosphorylation. The protein is Serine/threonine-protein kinase MRCK gamma of Homo sapiens (Human).